The chain runs to 116 residues: Ferredoxin-like protein in nif region (116 aa).

In terms of domain architecture, 4Fe-4S ferredoxin-type spans 2-29 (AYTITSQCISCKLCSSVCPTGAIKVAED). Positions 9, 12, 15, and 19 each coordinate iron-sulfur cluster.

The polypeptide is Ferredoxin-like protein in nif region (fdxN) (Trichormus azollae (Anabaena azollae)).